A 340-amino-acid chain; its full sequence is MSFIDEAKVYLKAGKGGDGCSSFRREKFIEFGGPDGGNGGNGGSIIFIASHHVNTLIYFKYKQHIKAENGHPGLSKNKFGLSGRDITIEVPIGTQIYDEEGTLITDLNSENQKFIVAQGGKGGIGNSRYKTSTNRAPRYFTLGEQGEEKWIILKLKIISDVGIIGLPNAGKSSFLASCTNSKTKIANYPFTTLEPELGVAFINNTELVLADIPGLISGAHLGYGIGDKFLKHIERCSILLHIIDCTLEDIIDSYKCIRKELSLYSKALTEKTEFILLNKCDLLDKEEISIKKRLLAEHTKKEIFTSSIKKSKQHILSILIKHINKDCSINKPFIYDPFNT.

The Obg domain maps to M1 to I158. The OBG-type G domain maps to S159–K325. GTP is bound by residues G165 to S172, F190 to E194, D211 to G214, N278 to D281, and S306 to I308. The Mg(2+) site is built by S172 and T192.

It belongs to the TRAFAC class OBG-HflX-like GTPase superfamily. OBG GTPase family. Monomer. Mg(2+) is required as a cofactor.

The protein localises to the cytoplasm. In terms of biological role, an essential GTPase which binds GTP, GDP and possibly (p)ppGpp with moderate affinity, with high nucleotide exchange rates and a fairly low GTP hydrolysis rate. Plays a role in control of the cell cycle, stress response, ribosome biogenesis and in those bacteria that undergo differentiation, in morphogenesis control. In Ehrlichia ruminantium (strain Gardel), this protein is GTPase Obg.